The following is a 487-amino-acid chain: Beta-barrel assembly-enhancing protease (487 aa).

Positions 1 to 27 (MFRQLKKNLVATLIAALALGQVAPAFA) are cleaved as a signal peptide. His136 provides a ligand contact to Zn(2+). Glu137 is a catalytic residue. The Zn(2+) site is built by His140 and Glu201. The Proton donor role is filled by Asp205. TPR repeat units follow at residues 309–342 (HAAQ…EPNN) and 427–460 (DQEL…AKLG).

The protein belongs to the peptidase M48 family. BepA subfamily. Zn(2+) serves as cofactor.

It is found in the periplasm. In terms of biological role, functions both as a chaperone and a metalloprotease. Maintains the integrity of the outer membrane by promoting either the assembly or the elimination of outer membrane proteins, depending on their folding state. The protein is Beta-barrel assembly-enhancing protease of Salmonella typhi.